Here is a 134-residue protein sequence, read N- to C-terminus: Small ribosomal subunit protein bS6 (134 aa).

The interval 99–134 (EPSAMMQKRDRDERKDRERGRRRDDDGYVGERNEEG) is disordered. Basic and acidic residues predominate over residues 105-134 (QKRDRDERKDRERGRRRDDDGYVGERNEEG).

This sequence belongs to the bacterial ribosomal protein bS6 family.

Binds together with bS18 to 16S ribosomal RNA. The sequence is that of Small ribosomal subunit protein bS6 from Methylobacterium sp. (strain 4-46).